A 478-amino-acid polypeptide reads, in one-letter code: Noelin-3 (478 aa).

Positions 1-23 are cleaved as a signal peptide; that stretch reads MSPPLLKLGAVLSTMAMISNWMS. Residues Asn33, Asn95, Asn179, Asn299, and Asn465 are each glycosylated (N-linked (GlcNAc...) asparagine). A coiled-coil region spans residues 77–217; the sequence is CSRDAKSRQL…TRLRDCMKKL (141 aa). The Olfactomedin-like domain maps to 218-470; sequence TCGKLMKITG…QVLFNVTLFH (253 aa). An intrachain disulfide couples Cys219 to Cys401.

Peripherally associated with AMPAR complex. AMPAR complex consists of an inner core made of 4 pore-forming GluA/GRIA proteins (GRIA1, GRIA2, GRIA3 and GRIA4) and 4 major auxiliary subunits arranged in a twofold symmetry. One of the two pairs of distinct binding sites is occupied either by CNIH2, CNIH3 or CACNG2, CACNG3. The other harbors CACNG2, CACNG3, CACNG4, CACNG8 or GSG1L. This inner core of AMPAR complex is complemented by outer core constituents binding directly to the GluA/GRIA proteins at sites distinct from the interaction sites of the inner core constituents. Outer core constituents include at least PRRT1, PRRT2, CKAMP44/SHISA9, FRRS1L and NRN1. The proteins of the inner and outer core serve as a platform for other, more peripherally associated AMPAR constituents, including OLFM3. Alone or in combination, these auxiliary subunits control the gating and pharmacology of the AMPAR complex and profoundly impact their biogenesis and protein processing. Homodimer. Interacts with MYOC. Interacts with OLFM2. In the eye, expressed in trabecular meshwork and neural retina; in non-ocular tissues, expressed in brain and lung.

It is found in the secreted. Its subcellular location is the synapse. This Homo sapiens (Human) protein is Noelin-3 (OLFM3).